Here is a 261-residue protein sequence, read N- to C-terminus: Tryptophan synthase alpha chain (261 aa).

Residues Glu-49 and Asp-60 each act as proton acceptor in the active site.

This sequence belongs to the TrpA family. Tetramer of two alpha and two beta chains.

It carries out the reaction (1S,2R)-1-C-(indol-3-yl)glycerol 3-phosphate + L-serine = D-glyceraldehyde 3-phosphate + L-tryptophan + H2O. It participates in amino-acid biosynthesis; L-tryptophan biosynthesis; L-tryptophan from chorismate: step 5/5. Its function is as follows. The alpha subunit is responsible for the aldol cleavage of indoleglycerol phosphate to indole and glyceraldehyde 3-phosphate. This chain is Tryptophan synthase alpha chain, found in Leifsonia xyli subsp. xyli (strain CTCB07).